We begin with the raw amino-acid sequence, 530 residues long: Probable flavin-containing monooxygenase 1 (530 aa).

FAD-binding positions include 17-21 (GAGVS), Glu-38, 46-47 (VW), and 58-59 (QS). NADP(+) is bound at residue 219–222 (SAID).

Belongs to the FMO family. FAD is required as a cofactor.

In terms of biological role, required for the establishment of systemic acquired resistance (SAR). Not involved in local defense mechanisms. Confers a salicylic acid-dependent (SA) resistance to virulent pathogens such as P.syringae pv tomato and H.parasitica. This chain is Probable flavin-containing monooxygenase 1 (FMO1), found in Arabidopsis thaliana (Mouse-ear cress).